The following is a 730-amino-acid chain: MFGRKRSVSFGGFGWIDKTMLASLKVKKQELANSSDATLPDRPLSPPLTAPPTMKSSEFFEMLEKMQGIKLEEQKPGPQKNKDDYIPYPSIDEVVEKGGPYPQVILPQFGGYWIEDPENVGTPTSLGSSICEEEEEDNLSPNTFGYKLECKGEARAYRRHFLGKDHLNFYCTGSSLGNLILSVKCEEAEGIEYLRVILRSKLKTVHERIPLAGLSKLPSVPQIAKAFCDDAVGLRFNPVLYPKASQMIVSYDEHEVNNTFKFGVIYQKARQTLEEELFGNNEESPAFKEFLDLLGDTITLQDFKGFRGGLDVTHGQTGVESVYTTFRDREIMFHVSTKLPFTDGDAQQLQRKRHIGNDIVAIIFQEENTPFVPDMIASNFLHAYIVVQVETPGTETPSYKVSVTAREDVPTFGPPLPSPPVFQKGPEFREFLLTKLTNAENACCKSDKFAKLEDRTRAALLDNLHDELHAHTQAMLGLGPEEDKFENGGHGGFLESFKRAIRVRSHSMETMVGGQKKSHSGGIPGSLSGGISHNSMEVTKTTFSPPVVAATVKNQSRSPIKRRSGLFPRLHTGSEGQGDSRARCDSTSSTPKTPDGGHSSQEIKSETSSNPSSPEICPNKEKPFMKLKENGRAISRSSSSTSSVSSTAGEGEAMEEGDSGGSQPSTTSPFKQEVFVYSPSPSSESPSLGAAATPIIMSRSPTDAKSRNSPRSNLKFRFDKLSHASSGAGH.

Phosphoserine; by PKG/PRKG1; in vitro is present on Ser-7. The segment at 32–53 is disordered; the sequence is ANSSDATLPDRPLSPPLTAPPT. At Ser-45 the chain carries Phosphoserine. The residue at position 49 (Thr-49) is a Phosphothreonine. The Rap-GAP domain maps to 248 to 464; it reads IVSYDEHEVN…RTRAALLDNL (217 aa). Position 507 is a phosphoserine (Ser-507). The disordered stretch occupies residues 509–533; it reads ETMVGGQKKSHSGGIPGSLSGGISH. 5 positions are modified to phosphoserine: Ser-544, Ser-558, Ser-564, Ser-612, and Ser-613. A disordered region spans residues 552–730; sequence VKNQSRSPIK…LSHASSGAGH (179 aa). The segment covering 585-613 has biased composition (polar residues); sequence DSTSSTPKTPDGGHSSQEIKSETSSNPSS. Residues 618 to 631 are compositionally biased toward basic and acidic residues; the sequence is PNKEKPFMKLKENG. A compositionally biased stretch (low complexity) spans 635–647; the sequence is SRSSSSTSSVSST. Polar residues predominate over residues 661–670; sequence GSQPSTTSPF. The span at 678–687 shows a compositional bias: low complexity; sequence SPSPSSESPS. A compositionally biased stretch (polar residues) spans 699–712; it reads RSPTDAKSRNSPRS.

In terms of processing, in vitro phosphorylated by cGMP-dependent protein kinase 1 (cGKI) at Ser-7; the phosphorylation probably does not regulate GAP activity. Isoform 1 and isoform 2 are expressed in platelets with isoform 2 being the predominant form. Expressed in lymphocytes, heart, testis and pancreas.

Its subcellular location is the cytoplasm. It localises to the perinuclear region. Its function is as follows. GTPase activator for the nuclear Ras-related regulatory protein RAP-1A (KREV-1), converting it to the putatively inactive GDP-bound state. This chain is Rap1 GTPase-activating protein 2 (RAP1GAP2), found in Homo sapiens (Human).